The following is a 274-amino-acid chain: Thiazole synthase (274 aa).

K115 acts as the Schiff-base intermediate with DXP in catalysis. Residues G176, 202–203, and 224–225 contribute to the 1-deoxy-D-xylulose 5-phosphate site; these read AG and NS.

This sequence belongs to the ThiG family. In terms of assembly, homotetramer. Forms heterodimers with either ThiH or ThiS.

Its subcellular location is the cytoplasm. The enzyme catalyses [ThiS sulfur-carrier protein]-C-terminal-Gly-aminoethanethioate + 2-iminoacetate + 1-deoxy-D-xylulose 5-phosphate = [ThiS sulfur-carrier protein]-C-terminal Gly-Gly + 2-[(2R,5Z)-2-carboxy-4-methylthiazol-5(2H)-ylidene]ethyl phosphate + 2 H2O + H(+). The protein operates within cofactor biosynthesis; thiamine diphosphate biosynthesis. Catalyzes the rearrangement of 1-deoxy-D-xylulose 5-phosphate (DXP) to produce the thiazole phosphate moiety of thiamine. Sulfur is provided by the thiocarboxylate moiety of the carrier protein ThiS. In vitro, sulfur can be provided by H(2)S. In Psychrobacter cryohalolentis (strain ATCC BAA-1226 / DSM 17306 / VKM B-2378 / K5), this protein is Thiazole synthase.